Reading from the N-terminus, the 266-residue chain is MTTILFELGTEELPPKNLKTLRDALKNSVGTLLNDQNISFDDIHAFAAPRRLALTITGVGEFQPDRIETKKGPSVKAAFDDAGNLTRAGQGFLQGLNATGRNLSVKDLGRIADKKGEYIAYDLTIKGEKITDLMPNILQKALDDLPIAKRMRSGIDRHEFIRPVHWIVLMSDDVVIEATIQGHKTGNQSRGHRYHSPDFFAIDHADHYENLLKNHHVIADFDQRQADILAQVKTLADDVNGTAIMPQELLDEVTALVDLPVALRAS.

This sequence belongs to the class-II aminoacyl-tRNA synthetase family. As to quaternary structure, tetramer of two alpha and two beta subunits.

Its subcellular location is the cytoplasm. The catalysed reaction is tRNA(Gly) + glycine + ATP = glycyl-tRNA(Gly) + AMP + diphosphate. This Moraxella catarrhalis (Branhamella catarrhalis) protein is Glycine--tRNA ligase beta subunit (glyS).